Reading from the N-terminus, the 262-residue chain is Global transcriptional regulator CodY (262 aa).

The interval 1 to 159 (MAHLLEKTRK…SSTVVGIQLL (159 aa)) is GAF domain. A DNA-binding region (H-T-H motif) is located at residues 207-226 (ASVIADRIGITRSVIVNALR).

The protein belongs to the CodY family.

Its subcellular location is the cytoplasm. In terms of biological role, DNA-binding global transcriptional regulator which is involved in the adaptive response to starvation and acts by directly or indirectly controlling the expression of numerous genes in response to nutrient availability. During rapid exponential growth, CodY is highly active and represses genes whose products allow adaptation to nutrient depletion. This Streptococcus gordonii (strain Challis / ATCC 35105 / BCRC 15272 / CH1 / DL1 / V288) protein is Global transcriptional regulator CodY.